The sequence spans 523 residues: MSLQTNHRPVLVVDFGAQYAQLIARRVREAGIYSEVIPHTATADDVRAKNAAALVLSGGPSSVYAEGAPSLDAEILDLGLPVFGICYGFQAMTHALGGTVANTGKREYGRTDINVAGGVLHEGLEACHKVWMSHGDAVSEAPEGFVVTASSEGAPVAAFENKERKMAGVQYHPEVLHSPHGQAVLTRFLTEIAGLEQNWTAANIAEELIEKVREQIGEDGRAICGLSGGVDSAVAGALVQRAIGDRLTCVFVDHGLLRAGEREQVEKDFVAATGAKLVTVDERQAFLSKLAGVTEPEAKRKAIGAEFIRSFERAVAGVLEEAPEGSTVDFLVQGTLYPDVVESGGGSGTANIKSHHNVGGLPDDVEFKLVEPLRDLFKDEVRAVGRELGLPEEIVGRQPFPGPGLGIRIIGEVTEDRLETLRHADLIARTELTEAGLDGVIWQCPVVLLADVRSVGVQGDGRTYGHPIVLRPVSSEDAMTADWTRLPYEVLEKISTRITNEVPDVNRVVLDVTSKPPGTIEWE.

In terms of domain architecture, Glutamine amidotransferase type-1 spans proline 9–asparagine 198. Cysteine 86 serves as the catalytic Nucleophile. Active-site residues include histidine 172 and glutamate 174. Residues tryptophan 199–arginine 397 enclose the GMPS ATP-PPase domain. An ATP-binding site is contributed by serine 227 to alanine 233.

Homodimer.

It carries out the reaction XMP + L-glutamine + ATP + H2O = GMP + L-glutamate + AMP + diphosphate + 2 H(+). The protein operates within purine metabolism; GMP biosynthesis; GMP from XMP (L-Gln route): step 1/1. In terms of biological role, catalyzes the synthesis of GMP from XMP. In Corynebacterium glutamicum (strain ATCC 13032 / DSM 20300 / JCM 1318 / BCRC 11384 / CCUG 27702 / LMG 3730 / NBRC 12168 / NCIMB 10025 / NRRL B-2784 / 534), this protein is GMP synthase [glutamine-hydrolyzing].